A 374-amino-acid polypeptide reads, in one-letter code: Queuine tRNA-ribosyltransferase (374 aa).

The active-site Proton acceptor is the Asp89. Residues 89 to 93 (DSGGF), Asp143, Gln187, and Gly214 each bind substrate. The tract at residues 245–251 (GVGKPED) is RNA binding. The active-site Nucleophile is the Asp264. Positions 269-273 (TRNAR) are RNA binding; important for wobble base 34 recognition. Zn(2+) is bound by residues Cys302, Cys304, Cys307, and His333.

It belongs to the queuine tRNA-ribosyltransferase family. In terms of assembly, homodimer. Within each dimer, one monomer is responsible for RNA recognition and catalysis, while the other monomer binds to the replacement base PreQ1. It depends on Zn(2+) as a cofactor.

The enzyme catalyses 7-aminomethyl-7-carbaguanine + guanosine(34) in tRNA = 7-aminomethyl-7-carbaguanosine(34) in tRNA + guanine. It functions in the pathway tRNA modification; tRNA-queuosine biosynthesis. Catalyzes the base-exchange of a guanine (G) residue with the queuine precursor 7-aminomethyl-7-deazaguanine (PreQ1) at position 34 (anticodon wobble position) in tRNAs with GU(N) anticodons (tRNA-Asp, -Asn, -His and -Tyr). Catalysis occurs through a double-displacement mechanism. The nucleophile active site attacks the C1' of nucleotide 34 to detach the guanine base from the RNA, forming a covalent enzyme-RNA intermediate. The proton acceptor active site deprotonates the incoming PreQ1, allowing a nucleophilic attack on the C1' of the ribose to form the product. After dissociation, two additional enzymatic reactions on the tRNA convert PreQ1 to queuine (Q), resulting in the hypermodified nucleoside queuosine (7-(((4,5-cis-dihydroxy-2-cyclopenten-1-yl)amino)methyl)-7-deazaguanosine). The chain is Queuine tRNA-ribosyltransferase from Serratia proteamaculans (strain 568).